Here is a 579-residue protein sequence, read N- to C-terminus: Mitochondrial distribution and morphology protein 36 (579 aa).

The segment at 1-27 is disordered; it reads MDENGTVKPGYELKGLNSGNSRSNMDK. At Ser42 the chain carries Phosphoserine. 2 disordered regions span residues 378-401 and 446-518; these read TPIN…GRRL and DNKH…ESQS. Positions 379-390 are enriched in polar residues; that stretch reads PINSSDSDNLSN. Positions 446 to 463 are enriched in basic and acidic residues; the sequence is DNKHSTKDTDSNIRRNEH. The segment covering 495-518 has biased composition (low complexity); sequence PSQSSSRMSTLPLSPSSSLLESQS.

Its function is as follows. Involved in mitochondrial distribution and morphology. The chain is Mitochondrial distribution and morphology protein 36 (MDM36) from Saccharomyces cerevisiae (strain ATCC 204508 / S288c) (Baker's yeast).